The chain runs to 171 residues: Large ribosomal subunit protein bL9 (171 aa).

The protein belongs to the bacterial ribosomal protein bL9 family.

Functionally, binds to the 23S rRNA. This is Large ribosomal subunit protein bL9 from Rickettsia africae (strain ESF-5).